We begin with the raw amino-acid sequence, 319 residues long: Aspartate carbamoyltransferase catalytic subunit (319 aa).

Carbamoyl phosphate contacts are provided by R54 and T55. Position 82 (K82) interacts with L-aspartate. Carbamoyl phosphate-binding residues include R104, H134, and Q137. R171 and R227 together coordinate L-aspartate. Residues G271 and P272 each contribute to the carbamoyl phosphate site.

Belongs to the aspartate/ornithine carbamoyltransferase superfamily. ATCase family. In terms of assembly, heterododecamer (2C3:3R2) of six catalytic PyrB chains organized as two trimers (C3), and six regulatory PyrI chains organized as three dimers (R2).

The catalysed reaction is carbamoyl phosphate + L-aspartate = N-carbamoyl-L-aspartate + phosphate + H(+). Its pathway is pyrimidine metabolism; UMP biosynthesis via de novo pathway; (S)-dihydroorotate from bicarbonate: step 2/3. Functionally, catalyzes the condensation of carbamoyl phosphate and aspartate to form carbamoyl aspartate and inorganic phosphate, the committed step in the de novo pyrimidine nucleotide biosynthesis pathway. The polypeptide is Aspartate carbamoyltransferase catalytic subunit (Kineococcus radiotolerans (strain ATCC BAA-149 / DSM 14245 / SRS30216)).